Reading from the N-terminus, the 324-residue chain is Putative ribose-phosphate pyrophosphokinase 1 (324 aa).

ATP is bound by residues 43 to 45 (DGE) and 102 to 103 (RQ). H136 provides a ligand contact to Mg(2+). D-ribose 5-phosphate contacts are provided by residues D225 and 229 to 233 (NTGQT).

Belongs to the ribose-phosphate pyrophosphokinase family. Class I subfamily. Homohexamer. Requires Mg(2+) as cofactor.

Its subcellular location is the cytoplasm. It carries out the reaction D-ribose 5-phosphate + ATP = 5-phospho-alpha-D-ribose 1-diphosphate + AMP + H(+). Its pathway is metabolic intermediate biosynthesis; 5-phospho-alpha-D-ribose 1-diphosphate biosynthesis; 5-phospho-alpha-D-ribose 1-diphosphate from D-ribose 5-phosphate (route I): step 1/1. Involved in the biosynthesis of the central metabolite phospho-alpha-D-ribosyl-1-pyrophosphate (PRPP) via the transfer of pyrophosphoryl group from ATP to 1-hydroxyl of ribose-5-phosphate (Rib-5-P). In Enterococcus faecalis (strain ATCC 700802 / V583), this protein is Putative ribose-phosphate pyrophosphokinase 1.